A 73-amino-acid chain; its full sequence is Mitofissin (73 aa).

It belongs to the ?ATG44? family. In terms of assembly, homooligomer. Found as homooctamer in solution, but binds to membranes either as a monomer, dimer, or tetramer, not as an octamer.

The protein localises to the mitochondrion intermembrane space. It localises to the vacuole. Mitochondrial fission factor that acts directly on lipid membranes to drive mitochondrial fission required for mitophagy. Directly binds to lipid membranes and brings about lipid membrane fragility to facilitate membrane fission and engulfment of mitochondria by the phagophore. The sequence is that of Mitofissin from Saccharomyces cerevisiae (strain ATCC 204508 / S288c) (Baker's yeast).